Consider the following 222-residue polypeptide: 3,4-dihydroxy-2-butanone 4-phosphate synthase (222 aa).

D-ribulose 5-phosphate is bound by residues Arg37–Glu38, Asp42, Arg150–Thr154, and Glu174. Glu38 contacts Mg(2+). His153 contributes to the Mg(2+) binding site.

It belongs to the DHBP synthase family. In terms of assembly, homodimer. Mg(2+) is required as a cofactor. The cofactor is Mn(2+).

The catalysed reaction is D-ribulose 5-phosphate = (2S)-2-hydroxy-3-oxobutyl phosphate + formate + H(+). The protein operates within cofactor biosynthesis; riboflavin biosynthesis; 2-hydroxy-3-oxobutyl phosphate from D-ribulose 5-phosphate: step 1/1. In terms of biological role, catalyzes the conversion of D-ribulose 5-phosphate to formate and 3,4-dihydroxy-2-butanone 4-phosphate. The chain is 3,4-dihydroxy-2-butanone 4-phosphate synthase from Chlorobium limicola (strain DSM 245 / NBRC 103803 / 6330).